The chain runs to 352 residues: Peptide chain release factor 1 (352 aa).

N5-methylglutamine is present on Gln233. The disordered stretch occupies residues 288–309 (NAKDRKEQVGSGDRSERIRTYN). A compositionally biased stretch (basic and acidic residues) spans 289 to 306 (AKDRKEQVGSGDRSERIR).

It belongs to the prokaryotic/mitochondrial release factor family. In terms of processing, methylated by PrmC. Methylation increases the termination efficiency of RF1.

It localises to the cytoplasm. Its function is as follows. Peptide chain release factor 1 directs the termination of translation in response to the peptide chain termination codons UAG and UAA. In Helicobacter pylori (strain ATCC 700392 / 26695) (Campylobacter pylori), this protein is Peptide chain release factor 1 (prfA).